Here is a 552-residue protein sequence, read N- to C-terminus: Berberine bridge enzyme-like 6 (552 aa).

The N-terminal stretch at 1–16 (MKEAFVFLLCLTNKFP) is a signal peptide. A disulfide bridge links Cys-56 with Cys-119. 6 N-linked (GlcNAc...) asparagine glycosylation sites follow: Asn-76, Asn-161, Asn-280, Asn-364, Asn-419, and Asn-463. Residues 93–270 (FSSPNFKKLL…LSWKINLVEV (178 aa)) form the FAD-binding PCMH-type domain. The 6-(S-cysteinyl)-8alpha-(pros-histidyl)-FAD (His-Cys) cross-link spans 134 to 196 (HDNEGFSYMS…QTLAFPAGVC (63 aa)).

It belongs to the oxygen-dependent FAD-linked oxidoreductase family. FAD is required as a cofactor. In terms of processing, the FAD cofactor is bound via a bicovalent 6-S-cysteinyl, 8alpha-N1-histidyl FAD linkage.

The protein localises to the secreted. It is found in the cell wall. Functionally, probable flavin-dependent oxidoreductase. This Arabidopsis thaliana (Mouse-ear cress) protein is Berberine bridge enzyme-like 6.